The sequence spans 152 residues: Deoxyuridine 5'-triphosphate nucleotidohydrolase (152 aa).

Residues 72–74 (RSG), Asn85, and 89–91 (TID) contribute to the substrate site.

This sequence belongs to the dUTPase family. It depends on Mg(2+) as a cofactor.

It carries out the reaction dUTP + H2O = dUMP + diphosphate + H(+). It participates in pyrimidine metabolism; dUMP biosynthesis; dUMP from dCTP (dUTP route): step 2/2. Its function is as follows. This enzyme is involved in nucleotide metabolism: it produces dUMP, the immediate precursor of thymidine nucleotides and it decreases the intracellular concentration of dUTP so that uracil cannot be incorporated into DNA. This is Deoxyuridine 5'-triphosphate nucleotidohydrolase from Rhodopseudomonas palustris (strain HaA2).